Reading from the N-terminus, the 21-residue chain is Fibrinogen beta chain (21 aa).

The residue at position 1 (glutamine 1) is a Pyrrolidone carboxylic acid. The span at 1–11 shows a compositional bias: acidic residues; that stretch reads QPSYDYDEEED. The tract at residues 1 to 21 is disordered; sequence QPSYDYDEEEDDRAKLRLDAR. A Sulfotyrosine modification is found at tyrosine 6. A compositionally biased stretch (basic and acidic residues) spans 12–21; sequence DRAKLRLDAR.

Heterohexamer; disulfide linked. Contains 2 sets of 3 non-identical chains (alpha, beta and gamma). The 2 heterotrimers are in head to head conformation with the N-termini in a small central domain. In terms of processing, conversion of fibrinogen to fibrin is triggered by thrombin, which cleaves fibrinopeptides A and B from alpha and beta chains, and thus exposes the N-terminal polymerization sites responsible for the formation of the soft clot.

The protein localises to the secreted. Its function is as follows. Cleaved by the protease thrombin to yield monomers which, together with fibrinogen alpha (FGA) and fibrinogen gamma (FGG), polymerize to form an insoluble fibrin matrix. Fibrin has a major function in hemostasis as one of the primary components of blood clots. In addition, functions during the early stages of wound repair to stabilize the lesion and guide cell migration during re-epithelialization. Was originally thought to be essential for platelet aggregation, based on in vitro studies using anticoagulated blood. However subsequent studies have shown that it is not absolutely required for thrombus formation in vivo. Enhances expression of SELP in activated platelets. Maternal fibrinogen is essential for successful pregnancy. Fibrin deposition is also associated with infection, where it protects against IFNG-mediated hemorrhage. May also facilitate the antibacterial immune response via both innate and T-cell mediated pathways. The polypeptide is Fibrinogen beta chain (FGB) (Antilocapra americana (Pronghorn)).